The chain runs to 224 residues: Mammalian ependymin-related protein 1 (224 aa).

A signal peptide spans 1-37 (MPARAPRRLVQGPRGTWLLGSLWVWVLCGLGMAGSLG). Disulfide bonds link Cys42–Cys172, Cys88–Cys222, and Cys113–Cys210. Residues Asn130 and Asn182 are each glycosylated (N-linked (GlcNAc...) asparagine).

This sequence belongs to the ependymin family. In terms of assembly, homodimer. In terms of processing, N-glycosylated; the glycan contains mannose-6-phosphate moieties. In terms of tissue distribution, detected in brain, small intestine and in soleus, extensor digitorum longus and white gastrocnemius (at protein level). Detected in brain and skeletal muscle, and at lower leavels in heart.

The protein resides in the lysosome lumen. The protein localises to the secreted. Functionally, binds anionic lipids and gangliosides at acidic pH. The protein is Mammalian ependymin-related protein 1 (Epdr1) of Mus musculus (Mouse).